The chain runs to 222 residues: Germin-like protein subfamily 1 member 13 (222 aa).

The N-terminal stretch at 1-18 (MRVSKSLILITLSALVIS) is a signal peptide. The cysteines at positions 32 and 49 are disulfide-linked. Residues 63 to 214 (SGLNQAGSTN…AFQLDVNIVE (152 aa)) form the Cupin type-1 domain. The N-linked (GlcNAc...) asparagine glycan is linked to Asn78. Positions 111, 113, 118, and 160 each coordinate Mn(2+).

This sequence belongs to the germin family. In terms of assembly, oligomer (believed to be a pentamer but probably hexamer).

It localises to the secreted. The protein resides in the extracellular space. It is found in the apoplast. Its function is as follows. May play a role in plant defense. Probably has no oxalate oxidase activity even if the active site is conserved. The chain is Germin-like protein subfamily 1 member 13 (GLP6) from Arabidopsis thaliana (Mouse-ear cress).